The sequence spans 465 residues: BTB/POZ and MATH domain-containing protein 4 (465 aa).

The segment at 12–40 (LQRQNPLQKSEQQRRNFEMPSPPTTTSLS) is disordered. One can recognise an MATH domain in the interval 46–180 (NGSHSFTIKG…DDCLKINCTV (135 aa)). Positions 216–282 (SDITFNVSGE…IYKDALIEDA (67 aa)) constitute a BTB domain. Disordered regions lie at residues 395 to 429 (SGGG…INGG) and 441 to 465 (VNAN…ELED). Positions 442-458 (NANGSGRNNNDNNNSDD) are enriched in low complexity.

It belongs to the Tdpoz family. Interacts with RAP2-4. Binds to MYB56 at the promoter of FLOWERING LOCUS T (FT). As to expression, ubiquitous.

It localises to the cytoplasm. It functions in the pathway protein modification; protein ubiquitination. Functionally, may act as a substrate-specific adapter of an E3 ubiquitin-protein ligase complex (CUL3-RBX1-BTB) which mediates the ubiquitination and subsequent proteasomal degradation of target proteins. The sequence is that of BTB/POZ and MATH domain-containing protein 4 (BPM4) from Arabidopsis thaliana (Mouse-ear cress).